A 56-amino-acid polypeptide reads, in one-letter code: Large ribosomal subunit protein bL32 (56 aa).

Residues 1 to 37 (MAVQQNKKSRSRRDMRRSHDALTTAAVSVDKTTGETH) form a disordered region. Residues 7–16 (KKSRSRRDMR) show a composition bias toward basic residues.

It belongs to the bacterial ribosomal protein bL32 family.

The protein is Large ribosomal subunit protein bL32 of Haemophilus ducreyi (strain 35000HP / ATCC 700724).